The sequence spans 300 residues: GTPase Era (300 aa).

In terms of domain architecture, Era-type G spans 7-182; the sequence is YCGFIAIVGR…LRKGVHHFPE (176 aa). The G1 stretch occupies residues 15 to 22; it reads GRPNVGKS. 15–22 serves as a coordination point for GTP; the sequence is GRPNVGKS. The tract at residues 41–45 is G2; that stretch reads QTTRH. The segment at 62-65 is G3; sequence DTPG. GTP is bound by residues 62 to 66 and 124 to 127; these read DTPGL and NKVD. The tract at residues 124-127 is G4; the sequence is NKVD. The G5 stretch occupies residues 154–156; it reads ISA. A KH type-2 domain is found at 206-283; sequence TGEELPYSVT…HLELWVKVKS (78 aa).

This sequence belongs to the TRAFAC class TrmE-Era-EngA-EngB-Septin-like GTPase superfamily. Era GTPase family. Monomer.

The protein localises to the cytoplasm. The protein resides in the cell inner membrane. Functionally, an essential GTPase that binds both GDP and GTP, with rapid nucleotide exchange. Plays a role in 16S rRNA processing and 30S ribosomal subunit biogenesis and possibly also in cell cycle regulation and energy metabolism. In Histophilus somni (strain 129Pt) (Haemophilus somnus), this protein is GTPase Era.